A 344-amino-acid polypeptide reads, in one-letter code: Anthranilate phosphoribosyltransferase (344 aa).

5-phospho-alpha-D-ribose 1-diphosphate-binding positions include Gly-84, 87–88 (GD), Thr-92, 94–97 (NIST), 112–120 (KHGNRSVSS), and Ser-124. Gly-84 contributes to the anthranilate binding site. Ser-96 is a Mg(2+) binding site. Asn-115 serves as a coordination point for anthranilate. Arg-170 provides a ligand contact to anthranilate. Mg(2+) is bound by residues Asp-229 and Glu-230.

This sequence belongs to the anthranilate phosphoribosyltransferase family. In terms of assembly, homodimer. Mg(2+) serves as cofactor.

It catalyses the reaction N-(5-phospho-beta-D-ribosyl)anthranilate + diphosphate = 5-phospho-alpha-D-ribose 1-diphosphate + anthranilate. Its pathway is amino-acid biosynthesis; L-tryptophan biosynthesis; L-tryptophan from chorismate: step 2/5. Functionally, catalyzes the transfer of the phosphoribosyl group of 5-phosphorylribose-1-pyrophosphate (PRPP) to anthranilate to yield N-(5'-phosphoribosyl)-anthranilate (PRA). The chain is Anthranilate phosphoribosyltransferase from Xylella fastidiosa (strain M23).